The sequence spans 358 residues: 3-dehydroquinate synthase (358 aa).

NAD(+) contacts are provided by residues 105-109, 129-130, Lys-142, Lys-151, and 169-172; these read GVVGD, TT, and TLKT. The Zn(2+) site is built by Glu-184, His-245, and His-262.

This sequence belongs to the sugar phosphate cyclases superfamily. Dehydroquinate synthase family. It depends on NAD(+) as a cofactor. Co(2+) is required as a cofactor. Zn(2+) serves as cofactor.

The protein resides in the cytoplasm. The enzyme catalyses 7-phospho-2-dehydro-3-deoxy-D-arabino-heptonate = 3-dehydroquinate + phosphate. The protein operates within metabolic intermediate biosynthesis; chorismate biosynthesis; chorismate from D-erythrose 4-phosphate and phosphoenolpyruvate: step 2/7. Functionally, catalyzes the conversion of 3-deoxy-D-arabino-heptulosonate 7-phosphate (DAHP) to dehydroquinate (DHQ). This Enterococcus faecalis (strain ATCC 700802 / V583) protein is 3-dehydroquinate synthase.